The primary structure comprises 460 residues: Argininosuccinate lyase (460 aa).

This sequence belongs to the lyase 1 family. Argininosuccinate lyase subfamily.

It is found in the cytoplasm. It catalyses the reaction 2-(N(omega)-L-arginino)succinate = fumarate + L-arginine. It functions in the pathway amino-acid biosynthesis; L-arginine biosynthesis; L-arginine from L-ornithine and carbamoyl phosphate: step 3/3. The protein is Argininosuccinate lyase of Lacticaseibacillus paracasei (strain ATCC 334 / BCRC 17002 / CCUG 31169 / CIP 107868 / KCTC 3260 / NRRL B-441) (Lactobacillus paracasei).